The sequence spans 243 residues: Uridylate kinase (243 aa).

ATP is bound at residue 15–18; sequence KLSG. The interval 23–28 is involved in allosteric activation by GTP; sequence GEEGFG. Gly-57 lines the UMP pocket. 2 residues coordinate ATP: Gly-58 and Arg-62. UMP-binding positions include Asp-77 and 138–145; that span reads TGNPFFTT. The ATP site is built by Thr-165, Phe-171, and Asp-174.

The protein belongs to the UMP kinase family. In terms of assembly, homohexamer.

Its subcellular location is the cytoplasm. It catalyses the reaction UMP + ATP = UDP + ADP. Its pathway is pyrimidine metabolism; CTP biosynthesis via de novo pathway; UDP from UMP (UMPK route): step 1/1. With respect to regulation, allosterically activated by GTP. Inhibited by UTP. Catalyzes the reversible phosphorylation of UMP to UDP. This chain is Uridylate kinase, found in Aliivibrio fischeri (strain ATCC 700601 / ES114) (Vibrio fischeri).